The chain runs to 226 residues: uncharacterized protein (226 aa).

The first 18 residues, 1–18 (MRRIGLCISLLVTVLVMS), serve as a signal peptide directing secretion.

This is an uncharacterized protein from Bacillus subtilis (strain 168).